Here is a 261-residue protein sequence, read N- to C-terminus: Ribonuclease HII (261 aa).

Positions 1–20 (MIRDKSAKRPAKDAPKKAAV) are enriched in basic and acidic residues. The disordered stretch occupies residues 1-23 (MIRDKSAKRPAKDAPKKAAVKEA). The region spanning 42–230 (WPVAGCDEAG…VAAARAKHMP (189 aa)) is the RNase H type-2 domain. Positions 48, 49, and 139 each coordinate a divalent metal cation.

It belongs to the RNase HII family. The cofactor is Mn(2+). Mg(2+) serves as cofactor.

The protein localises to the cytoplasm. The catalysed reaction is Endonucleolytic cleavage to 5'-phosphomonoester.. Its function is as follows. Endonuclease that specifically degrades the RNA of RNA-DNA hybrids. The protein is Ribonuclease HII of Bradyrhizobium diazoefficiens (strain JCM 10833 / BCRC 13528 / IAM 13628 / NBRC 14792 / USDA 110).